The sequence spans 1135 residues: Phytochrome C (1135 aa).

The span at 1–11 (MSSPLNNRGTC) shows a compositional bias: polar residues. The segment at 1-26 (MSSPLNNRGTCSRSSSARSRHSARVV) is disordered. Positions 216 to 399 (NLSLLCDVLV…VFGIQLNKEV (184 aa)) constitute a GAF domain. Cysteine 321 contacts phytochromobilin. 2 PAS domains span residues 618–688 (VTNE…LQGI) and 748–822 (IQGD…TKLS). Positions 902–1122 (YIHQELRNPL…IILIEFPVAQ (221 aa)) constitute a Histidine kinase domain.

It belongs to the phytochrome family. As to quaternary structure, homodimer. Post-translationally, contains one covalently linked phytochromobilin chromophore.

In terms of biological role, regulatory photoreceptor which exists in two forms that are reversibly interconvertible by light: the Pr form that absorbs maximally in the red region of the spectrum and the Pfr form that absorbs maximally in the far-red region. Photoconversion of Pr to Pfr induces an array of morphogenic responses, whereas reconversion of Pfr to Pr cancels the induction of those responses. Pfr controls the expression of a number of nuclear genes including those encoding the small subunit of ribulose-bisphosphate carboxylase, chlorophyll A/B binding protein, protochlorophyllide reductase, rRNA, etc. It also controls the expression of its own gene(s) in a negative feedback fashion. The protein is Phytochrome C (PHYC) of Sorghum bicolor (Sorghum).